The sequence spans 907 residues: DNA ligase 4 (907 aa).

9 residues coordinate ATP: Glu-273, Lys-275, Arg-280, Glu-333, Phe-378, Glu-438, Lys-443, Lys-460, and Lys-462. Lys-275 acts as the N6-AMP-lysine intermediate in catalysis. Residue Glu-333 participates in Mg(2+) binding. Glu-438 lines the Mg(2+) pocket. 2 BRCT domains span residues 655–754 (PVSN…ESDI) and 800–906 (VPLF…HYQC).

This sequence belongs to the ATP-dependent DNA ligase family. It depends on Mg(2+) as a cofactor.

The protein localises to the nucleus. It carries out the reaction ATP + (deoxyribonucleotide)n-3'-hydroxyl + 5'-phospho-(deoxyribonucleotide)m = (deoxyribonucleotide)n+m + AMP + diphosphate.. Functionally, DNA ligase involved in DNA non-homologous end joining (NHEJ); required for double-strand break (DSB) repair. The polypeptide is DNA ligase 4 (LIG4) (Kluyveromyces lactis (strain ATCC 8585 / CBS 2359 / DSM 70799 / NBRC 1267 / NRRL Y-1140 / WM37) (Yeast)).